The sequence spans 497 residues: ATP-dependent RNA helicase CshA (497 aa).

The Q motif signature appears at 1-29 (MKFSELGLSDSLLKAIKRSGYEEATPIQE). The 171-residue stretch at 32 to 202 (IPMVLEGKDV…VQFMSDPETV (171 aa)) folds into the Helicase ATP-binding domain. 45-52 (AQTGTGKT) is an ATP binding site. The short motif at 150-153 (DEAD) is the DEAD box element. One can recognise a Helicase C-terminal domain in the interval 228-373 (DIMTRLIDVQ…PLKPPTAEEA (146 aa)). Residues 425-497 (AASEVPVKIT…SFNIRHRKEN (73 aa)) form a disordered region. Residues 448-458 (RNGNRNNSHGG) show a composition bias toward low complexity. Composition is skewed to basic residues over residues 459–473 (NHYR…QHGS) and 481–497 (KSHS…RKEN).

The protein belongs to the DEAD box helicase family. CshA subfamily. Oligomerizes, may be a member of the RNA degradosome.

The protein localises to the cytoplasm. It is found in the cell membrane. The enzyme catalyses ATP + H2O = ADP + phosphate + H(+). Functionally, DEAD-box RNA helicase possibly involved in RNA degradation. Unwinds dsRNA in both 5'- and 3'-directions, has RNA-dependent ATPase activity. Over-expression leads to cell aggregation. The protein is ATP-dependent RNA helicase CshA of Limosilactobacillus reuteri (Lactobacillus reuteri).